The primary structure comprises 229 residues: Potassium/proton antiporter CemA (229 aa).

Transmembrane regions (helical) follow at residues 7 to 27 (LNPL…SLSF), 106 to 126 (IILH…YSIL), and 189 to 209 (IISG…KYWI).

It belongs to the CemA family.

Its subcellular location is the plastid. It localises to the chloroplast inner membrane. It catalyses the reaction K(+)(in) + H(+)(out) = K(+)(out) + H(+)(in). Functionally, contributes to K(+)/H(+) antiport activity by supporting proton efflux to control proton extrusion and homeostasis in chloroplasts in a light-dependent manner to modulate photosynthesis. Prevents excessive induction of non-photochemical quenching (NPQ) under continuous-light conditions. Indirectly promotes efficient inorganic carbon uptake into chloroplasts. In Nymphaea alba (White water-lily), this protein is Potassium/proton antiporter CemA.